A 404-amino-acid polypeptide reads, in one-letter code: Phosphopentomutase (404 aa).

D10, D303, H308, D344, H345, and H356 together coordinate Mn(2+).

It belongs to the phosphopentomutase family. The cofactor is Mn(2+).

It is found in the cytoplasm. It carries out the reaction 2-deoxy-alpha-D-ribose 1-phosphate = 2-deoxy-D-ribose 5-phosphate. The catalysed reaction is alpha-D-ribose 1-phosphate = D-ribose 5-phosphate. Its pathway is carbohydrate degradation; 2-deoxy-D-ribose 1-phosphate degradation; D-glyceraldehyde 3-phosphate and acetaldehyde from 2-deoxy-alpha-D-ribose 1-phosphate: step 1/2. Isomerase that catalyzes the conversion of deoxy-ribose 1-phosphate (dRib-1-P) and ribose 1-phosphate (Rib-1-P) to deoxy-ribose 5-phosphate (dRib-5-P) and ribose 5-phosphate (Rib-5-P), respectively. The polypeptide is Phosphopentomutase (Shewanella oneidensis (strain ATCC 700550 / JCM 31522 / CIP 106686 / LMG 19005 / NCIMB 14063 / MR-1)).